Consider the following 218-residue polypeptide: UPF0319 protein PM0395 (218 aa).

The N-terminal stretch at 1 to 21 (MKFRFAALASVALLTSTVSVA) is a signal peptide.

It belongs to the UPF0319 family.

In Pasteurella multocida (strain Pm70), this protein is UPF0319 protein PM0395.